We begin with the raw amino-acid sequence, 146 residues long: Large ribosomal subunit protein uL11 (146 aa).

This sequence belongs to the universal ribosomal protein uL11 family. Part of the ribosomal stalk of the 50S ribosomal subunit. Interacts with L10 and the large rRNA to form the base of the stalk. L10 forms an elongated spine to which L12 dimers bind in a sequential fashion forming a multimeric L10(L12)X complex. One or more lysine residues are methylated.

Functionally, forms part of the ribosomal stalk which helps the ribosome interact with GTP-bound translation factors. This is Large ribosomal subunit protein uL11 from Salinibacter ruber (strain DSM 13855 / M31).